The following is a 355-amino-acid chain: Putative arylamide transporter (355 aa).

Transmembrane regions (helical) follow at residues 22–42 (TVLW…YLTH), 44–64 (VFNH…MSAT), 71–91 (RAQQ…GVHA), 92–112 (LLGS…SVAV), 119–139 (VAQG…VLVF), and 150–170 (LFDA…LFPP).

It localises to the cell membrane. In terms of biological role, may be involved in the import of arylamide compounds. The sequence is that of Putative arylamide transporter from Mycobacterium bovis (strain ATCC BAA-935 / AF2122/97).